The primary structure comprises 241 residues: Orotidine 5'-phosphate decarboxylase (241 aa).

Substrate is bound by residues Asp19, Lys41, 69-78, Thr124, Arg185, Gln194, Gly214, and Arg215; that span reads DLKFFDIPAT. Lys71 functions as the Proton donor in the catalytic mechanism.

This sequence belongs to the OMP decarboxylase family. Type 1 subfamily. Homodimer.

It carries out the reaction orotidine 5'-phosphate + H(+) = UMP + CO2. The protein operates within pyrimidine metabolism; UMP biosynthesis via de novo pathway; UMP from orotate: step 2/2. In terms of biological role, catalyzes the decarboxylation of orotidine 5'-monophosphate (OMP) to uridine 5'-monophosphate (UMP). The polypeptide is Orotidine 5'-phosphate decarboxylase (Stenotrophomonas maltophilia (strain K279a)).